We begin with the raw amino-acid sequence, 953 residues long: Atromentin synthetase invA5 (953 aa).

Positions 37 to 460 are adenylation (A) domain; sequence SRAVSQYPDH…SGRIKDTVIV (424 aa). The Carrier domain occupies 592 to 670; sequence APSTETEKTL…SLAKYVDSLI (79 aa). The segment at 597–667 is thiolation and peptide carrier (T) domain; the sequence is TEKTLAGIYA…VISSLAKYVD (71 aa). Serine 629 is modified (O-(pantetheine 4'-phosphoryl)serine). The segment at 693 to 795 is thioesterase (TE) domain; it reads PIFMVHPGVG…FTGLINIPPN (103 aa).

It belongs to the ATP-dependent AMP-binding enzyme family.

Its pathway is secondary metabolite biosynthesis. Functionally, an L-tyrosine:2-oxoglutarate aminotransferase (probably invD) and atromentin synthetase invA5 catalyze consecutive steps to turn over L-tyrosine into atromentin, which represents the generic precursor molecule for the entire terphenylquinone and pulvinic acid family of pigments, which are widely distributed secondary metabolites in homobasidiomycetes. The first step catalyzed by the aminotransferase converts L-tyrosine in to 4-hydroxyphenylpyruvate (4-HPP). Adenylation of two 4-HPP monomers by the invA5 adenylation (A) domain, covalent tethering of the monomers as a thioester and oxoester onto the invA5 thiolation (T) and thioesterase (TE) domains, respectively, and symmetric C-C-bond formation between two monomers catalyzed by the invA5 TE domain leads to atromentin. The sequence is that of Atromentin synthetase invA5 (invA5) from Paxillus involutus (Naked brimcap).